The primary structure comprises 769 residues: MKGITFFTPFLSFLYLLCILFMTETEAGSRNGDGVYIVYMGSASSAANANRAQILINTMFKRRANDLLHTYKHGFSGFAARLTAEEAKVIAKKPGVVSVFPDPHFQLHTTHSWDFLKYQTSVKVDSGPPSSASDGSYDSIVGILDTGIWPESESFNDKDMGPIPSRWKGTCMEAKDFKSSNCNRKIIGARYYKNPDDDSEYYTTRDVIGHGSHVSSTIAGSAVENASYYGVASGTAKGGSQNARIAMYKVCNPGGCTGSSILAAFDDAIADGVDVLSLSLGAPAYARIDLNTDPIAIGAFHAVEQGILVICSAGNDGPDGGTVTNTAPWIMTVAANTIDRDFESDVVLGGNKVIKGEGIHFSNVSKSPVYPLIHGKSAKSADASEGSARACDSDSLDQEKVKGKIVLCENVGGSYYASSARDEVKSKGGTGCVFVDDRTRAVASAYGSFPTTVIDSKEAAEIFSYLNSTKDPVATILPTATVEKFTPAPAVAYFSSRGPSSLTRSILKPDITAPGVSILAAWTGNDSSISLEGKPASQYNVISGTSMAAPHVSAVASLIKSQHPTWGPSAIRSAIMTTATQTNNDKGLITTETGATATPYDSGAGELSSTASMQPGLVYETTETDYLNFLCYYGYNVTTIKAMSKAFPENFTCPADSNLDLISTINYPSIGISGFKGNGSKTVTRTVTNVGEDGEAVYTVSVETPPGFNIQVTPEKLQFTKDGEKLTYQVIVSATASLKQDVFGALTWSNAKYKVRSPIVISSESSRTN.

The N-terminal stretch at 1 to 27 (MKGITFFTPFLSFLYLLCILFMTETEA) is a signal peptide. Residues 35–108 (VYIVYMGSAS…VFPDPHFQLH (74 aa)) form the Inhibitor I9 domain. Positions 112 to 613 (SWDFLKYQTS…AGELSSTASM (502 aa)) constitute a Peptidase S8 domain. Residues D145 and H210 each act as charge relay system in the active site. Residues 381–465 (ADASEGSARA…SKEAAEIFSY (85 aa)) form the PA domain. The Charge relay system role is filled by S546.

The protein belongs to the peptidase S8 family. Expressed in roots, guard cells and meristemoid and pavement cells.

It localises to the secreted. The protein localises to the cell wall. The catalysed reaction is Release of an N-terminal tripeptide from a polypeptide.. In terms of biological role, mediates CO(2)-controlled stomatal development by cleaving peptide EPF2 (AC Q8LC53). Not active on peptides EPF1 (AC Q8S8I4) or stomagen (AC Q9SV72). This Arabidopsis thaliana (Mouse-ear cress) protein is CO(2)-response secreted protease.